The chain runs to 117 residues: uncharacterized protein (117 aa).

A signal peptide spans 1 to 20; the sequence is MAAVHLYIISFTALMISSTS.

This is an uncharacterized protein from Saccharomyces cerevisiae (strain ATCC 204508 / S288c) (Baker's yeast).